The following is a 163-amino-acid chain: Nucleotide-binding protein PMI0103 (163 aa).

This sequence belongs to the YajQ family.

Nucleotide-binding protein. The polypeptide is Nucleotide-binding protein PMI0103 (Proteus mirabilis (strain HI4320)).